We begin with the raw amino-acid sequence, 300 residues long: Protoheme IX farnesyltransferase 1 (300 aa).

8 helical membrane-spanning segments follow: residues V28–V48, V50–Y70, A106–L126, I150–G170, A176–I196, C222–M242, C243–W263, and F280–S300.

This sequence belongs to the UbiA prenyltransferase family. Protoheme IX farnesyltransferase subfamily.

The protein localises to the cell inner membrane. The enzyme catalyses heme b + (2E,6E)-farnesyl diphosphate + H2O = Fe(II)-heme o + diphosphate. It functions in the pathway porphyrin-containing compound metabolism; heme O biosynthesis; heme O from protoheme: step 1/1. Its function is as follows. Converts heme B (protoheme IX) to heme O by substitution of the vinyl group on carbon 2 of heme B porphyrin ring with a hydroxyethyl farnesyl side group. The sequence is that of Protoheme IX farnesyltransferase 1 from Shewanella loihica (strain ATCC BAA-1088 / PV-4).